The primary structure comprises 307 residues: UDP-3-O-acyl-N-acetylglucosamine deacetylase (307 aa).

Zn(2+) contacts are provided by histidine 78, histidine 241, and aspartate 245. Histidine 268 (proton donor) is an active-site residue.

It belongs to the LpxC family. Zn(2+) is required as a cofactor.

It carries out the reaction a UDP-3-O-[(3R)-3-hydroxyacyl]-N-acetyl-alpha-D-glucosamine + H2O = a UDP-3-O-[(3R)-3-hydroxyacyl]-alpha-D-glucosamine + acetate. Its pathway is glycolipid biosynthesis; lipid IV(A) biosynthesis; lipid IV(A) from (3R)-3-hydroxytetradecanoyl-[acyl-carrier-protein] and UDP-N-acetyl-alpha-D-glucosamine: step 2/6. In terms of biological role, catalyzes the hydrolysis of UDP-3-O-myristoyl-N-acetylglucosamine to form UDP-3-O-myristoylglucosamine and acetate, the committed step in lipid A biosynthesis. The chain is UDP-3-O-acyl-N-acetylglucosamine deacetylase from Verminephrobacter eiseniae (strain EF01-2).